Reading from the N-terminus, the 177-residue chain is FCS-Like Zinc finger 1 (177 aa).

Low complexity predominate over residues 22-46 (SLSEMEAGFSGNNNNSNNHGNPQNG). 2 disordered regions span residues 22 to 49 (SLSE…GVVS) and 134 to 177 (ERDE…VAAA). The FLZ-type zinc finger occupies 96–140 (HFLDSCFLCKKPLGDNRDIYMYRGDTPFCSEECRQEQIERDEAKE). Composition is skewed to basic and acidic residues over residues 134–143 (ERDEAKEKKQ) and 154–168 (RRKE…RDYA).

The protein belongs to the FLZ family. Interacts with KIN10 and KIN11 via its FLZ-type zinc finger domain. Interacts with KINB1, KINB2 and KINB3 via its N-terminal part. Interacts with DSP3 and BBX21 via its FLZ-type zinc finger domain. Forms heterodimer with FLZ7 and FLZ15 in vitro.

The protein localises to the nucleus. The protein resides in the cytoplasm. May act as an adapter to facilitate the interaction of SnRK1 complex with effector proteins, conferring tissue- and stimulus-type specific differences in the SnRK1 regulation pathway. The protein is FCS-Like Zinc finger 1 of Arabidopsis thaliana (Mouse-ear cress).